A 205-amino-acid polypeptide reads, in one-letter code: Small ribosomal subunit protein uS4 (205 aa).

Residues 1–16 (MSKRETTKYKIDRRMG) show a composition bias toward basic and acidic residues. The interval 1–46 (MSKRETTKYKIDRRMGENIWGRPKSPVNRRDYGPGQHGQRRKGKLS) is disordered. In terms of domain architecture, S4 RNA-binding spans 94-157 (SRLDAVIYRA…KQLVLVLESV (64 aa)).

Belongs to the universal ribosomal protein uS4 family. In terms of assembly, part of the 30S ribosomal subunit. Contacts protein S5. The interaction surface between S4 and S5 is involved in control of translational fidelity.

In terms of biological role, one of the primary rRNA binding proteins, it binds directly to 16S rRNA where it nucleates assembly of the body of the 30S subunit. Its function is as follows. With S5 and S12 plays an important role in translational accuracy. The chain is Small ribosomal subunit protein uS4 from Bartonella quintana (strain Toulouse) (Rochalimaea quintana).